The following is a 146-amino-acid chain: MKLNELKPNEGSRRNRKRVGRGTSSGYGKTAGRGQKGQLARTGGKTRLGFEGGQMPLFRRMPKRGFKNVNRKEYAIINLNDLNRFDDGSEVTIDTLKSSGLVKKELAGVKLLANGELKVKLTVKVNKASEAAKKAVEAAGGTVEVI.

Positions 1 to 13 are enriched in basic and acidic residues; it reads MKLNELKPNEGSR. The segment at 1 to 54 is disordered; that stretch reads MKLNELKPNEGSRRNRKRVGRGTSSGYGKTAGRGQKGQLARTGGKTRLGFEGGQ. Gly residues predominate over residues 23 to 35; the sequence is TSSGYGKTAGRGQ.

The protein belongs to the universal ribosomal protein uL15 family. Part of the 50S ribosomal subunit.

Its function is as follows. Binds to the 23S rRNA. This chain is Large ribosomal subunit protein uL15, found in Lactobacillus johnsonii (strain CNCM I-12250 / La1 / NCC 533).